Reading from the N-terminus, the 187-residue chain is ATP synthase subunit delta, chloroplastic (187 aa).

Belongs to the ATPase delta chain family. In terms of assembly, F-type ATPases have 2 components, F(1) - the catalytic core - and F(0) - the membrane proton channel. F(1) has five subunits: alpha(3), beta(3), gamma(1), delta(1), epsilon(1). CF(0) has four main subunits: a(1), b(1), b'(1) and c(10-14). The alpha and beta chains form an alternating ring which encloses part of the gamma chain. F(1) is attached to F(0) by a central stalk formed by the gamma and epsilon chains, while a peripheral stalk is formed by the delta, b and b' chains.

Its subcellular location is the plastid. The protein resides in the chloroplast thylakoid membrane. Functionally, f(1)F(0) ATP synthase produces ATP from ADP in the presence of a proton or sodium gradient. F-type ATPases consist of two structural domains, F(1) containing the extramembraneous catalytic core and F(0) containing the membrane proton channel, linked together by a central stalk and a peripheral stalk. During catalysis, ATP synthesis in the catalytic domain of F(1) is coupled via a rotary mechanism of the central stalk subunits to proton translocation. In terms of biological role, this protein is part of the stalk that links CF(0) to CF(1). It either transmits conformational changes from CF(0) to CF(1) or is implicated in proton conduction. The polypeptide is ATP synthase subunit delta, chloroplastic (Trieres chinensis (Marine centric diatom)).